Consider the following 219-residue polypeptide: RPA-interacting protein (219 aa).

The residue at position 18 (Ser18) is a Phosphoserine. Lys121 is covalently cross-linked (Glycyl lysine isopeptide (Lys-Gly) (interchain with G-Cter in SUMO); in isoform 2). An RIP-type zinc finger spans residues 137–212 (CPVCTKYNLR…SSLLMSCLAC (76 aa)). A mediates nuclear export region spans residues 164-180 (SSELTEQKLRACLEGSI).

In terms of assembly, interacts with the RPA1 subunit of RPA complex. Post-translationally, sumoylated. Sumoylation is required for localization in the nuclear PML body and transport of RPA complex in PML body. Upon UV irradiation and during S phase, it is desumoylated, releasing RPA complex that is translocated to sites of DNA damage. Sumoylation takes place at different Lys residues. Variant 'Lys-103' adds a sumoylation site and increases total sumoylation levels. As to expression, widely expressed. Expressed in pancreas, kidney, muscle, liver, lung, placenta, brain, heart, leukocytes, colon, intestine, ovary, testis, prostate, thymus and spleen.

It localises to the cytoplasm. The protein localises to the nucleus. It is found in the PML body. Functionally, mediates the import of RPA complex into the nucleus, possibly via some interaction with importin beta. Isoform 2 is sumoylated and mediates the localization of RPA complex into the PML body of the nucleus, thereby participating in RPA function in DNA metabolism. This Homo sapiens (Human) protein is RPA-interacting protein (RPAIN).